The following is a 237-amino-acid chain: Oligoribonuclease, mitochondrial (237 aa).

Residues 1–25 (MLGVSLGARLLRGVGGRRGQFGARG) constitute a mitochondrion transit peptide. The Exonuclease domain maps to 43-207 (MVWVDLEMTG…DDISESIKEL (165 aa)). The Mg(2+) site is built by Asp-47 and Glu-49. Ser-92 is subject to Phosphoserine. Position 122 is a phosphotyrosine (Tyr-122). Asp-147 is a binding site for Mg(2+). An N6-acetyllysine modification is found at Lys-173. His-194 is a catalytic residue. Asp-199 contributes to the Mg(2+) binding site.

This sequence belongs to the oligoribonuclease family. Homodimer. Homotetramer. It depends on Mn(2+) as a cofactor. The cofactor is Mg(2+).

Its subcellular location is the mitochondrion intermembrane space. It localises to the mitochondrion matrix. The protein localises to the mitochondrion. The protein resides in the cytoplasm. It is found in the nucleus. In terms of biological role, 3'-to-5'exoribonuclease that preferentially degrades DNA and RNA oligonucleotides composed of only two nucleotides. Binds and degrades longer oligonucleotides with a lower affinity. Plays dual roles in mitochondria, scavenging nanoRNAs (small RNA oligonucleotides of &lt;5 nucleotides) that are produced by the degradosome and clearing short RNAs that are generated by RNA processing. Essential for correct initiation of mitochondrial transcription, degrading mitochondrial RNA dinucleotides to prevent RNA-primed transcription at non-canonical sites in the mitochondrial genome. Essential for embryonic development. The polypeptide is Oligoribonuclease, mitochondrial (Rexo2) (Mus musculus (Mouse)).